The following is a 433-amino-acid chain: Ascus wall endo-1,3-alpha-glucanase (433 aa).

The protein belongs to the glycosyl hydrolase 71 family.

Its subcellular location is the ascus epiplasm. It catalyses the reaction Endohydrolysis of (1-&gt;3)-alpha-D-glucosidic linkages in isolichenin, pseudonigeran and nigeran.. Promotes the release of ascospores from asci by hydrolyzing 1,3-alpha-glucan in the ascus wall. The chain is Ascus wall endo-1,3-alpha-glucanase from Schizosaccharomyces pombe (strain 972 / ATCC 24843) (Fission yeast).